The sequence spans 470 residues: Cell division protein FtsP (470 aa).

A signal peptide (tat-type signal) is located at residues 1 to 27 (MSLSRRQFIQASGIALCAGAVPLKASA). The Plastocyanin-like domain occupies 229-287 (VRLRLLNASNSRRYQLQMSDGRPLHVISGDQGFLPAPVSVKQLSLAPGERREILVDMSN).

This sequence belongs to the FtsP family. Post-translationally, predicted to be exported by the Tat system. The position of the signal peptide cleavage has not been experimentally proven.

It is found in the periplasm. In terms of biological role, cell division protein that is required for growth during stress conditions. May be involved in protecting or stabilizing the divisomal assembly under conditions of stress. The chain is Cell division protein FtsP from Shigella dysenteriae serotype 1 (strain Sd197).